The following is a 271-amino-acid chain: MEELRERVWNGTINVEVVVSDAIVVPNTTLADKSCHIVMLRDAYLGFYLPTVVRKLADTIKVPYESDYRNWWFEYNGEGVPWEYPCGVLFDLLNKKRKKQGNELDDTSLQMWELQLCHGDKYPRGILPLVDGHSQIKDYWRHQWKQACFILNGSAKRIMSLSIPDFENFWVSILSRNRSDFMAVRSKLFSMNKAKSLPVRVWTSNYAVLQPTVPVTDKELSVAELLDSIKLSSDGVKSVIIQGIDVSIEDNIFELYDIFASIDGFLYLVTK.

Lys-145 participates in a covalent cross-link: Glycyl lysine isopeptide (Lys-Gly) (interchain with G-Cter in ATG12).

This sequence belongs to the ATG5 family. As to quaternary structure, conjugated with ATG12. Interacts with ATG10. The ATG5-ATG12 conjugate forms a complex with several units of ATG16. The ATG12-ATG5 conjugate also associates with ATG3. Conjugated to ATG12; which is essential for autophagy. Conjugation with ATG12 involves ATG7 as an E1-like activating enzyme and ATG10 as an E2-like conjugating enzyme.

The protein resides in the preautophagosomal structure membrane. Its function is as follows. Involved in cytoplasm to vacuole transport (Cvt) and autophagic vesicle formation. Autophagy is essential for maintenance of amino acid levels and protein synthesis under nitrogen starvation. Required for selective autophagic degradation of the nucleus (nucleophagy). Also required for mitophagy, which eliminates defective or superfluous mitochondria in order to fulfill cellular energy requirements and prevent excess ROS production. Conjugation with ATG12, through a ubiquitin-like conjugating system involving ATG7 as an E1-like activating enzyme and ATG10 as an E2-like conjugating enzyme, is essential for its function. The ATG12-ATG5 conjugate acts as an E3-like enzyme which is required for lipidation of ATG8 and ATG8 association to the vesicle membranes. ATG12-ATG5 rearranges the ATG3 catalytic center and enhances its E2 activity. The sequence is that of Autophagy-related protein 5 from Kluyveromyces marxianus (strain DMKU3-1042 / BCC 29191 / NBRC 104275) (Yeast).